The primary structure comprises 202 residues: Holliday junction branch migration complex subunit RuvA (202 aa).

The interval 1 to 63 (MIAFLSGRVV…EDSLTLFGFA (63 aa)) is domain I. Residues 64 to 142 (DDDERDTFER…EPGGDTAATP (79 aa)) are domain II. A flexible linker region spans residues 143 to 152 (EQSAAAAPRN). The domain III stretch occupies residues 152–202 (NWRAQVVSGLVNLGWSTREAEAAADAVAAEAGEQPDVAALLRSALRRLSRA).

This sequence belongs to the RuvA family. Homotetramer. Forms an RuvA(8)-RuvB(12)-Holliday junction (HJ) complex. HJ DNA is sandwiched between 2 RuvA tetramers; dsDNA enters through RuvA and exits via RuvB. An RuvB hexamer assembles on each DNA strand where it exits the tetramer. Each RuvB hexamer is contacted by two RuvA subunits (via domain III) on 2 adjacent RuvB subunits; this complex drives branch migration. In the full resolvosome a probable DNA-RuvA(4)-RuvB(12)-RuvC(2) complex forms which resolves the HJ.

Its subcellular location is the cytoplasm. Functionally, the RuvA-RuvB-RuvC complex processes Holliday junction (HJ) DNA during genetic recombination and DNA repair, while the RuvA-RuvB complex plays an important role in the rescue of blocked DNA replication forks via replication fork reversal (RFR). RuvA specifically binds to HJ cruciform DNA, conferring on it an open structure. The RuvB hexamer acts as an ATP-dependent pump, pulling dsDNA into and through the RuvAB complex. HJ branch migration allows RuvC to scan DNA until it finds its consensus sequence, where it cleaves and resolves the cruciform DNA. The protein is Holliday junction branch migration complex subunit RuvA of Thermobifida fusca (strain YX).